Consider the following 292-residue polypeptide: MGKIEATSKEEKLRVQKEAEARRRAYRDLKKEARQMQKEVKFDTDDNSELPKKRFYRQRAHSNPFSDHRLEYPRSPDTMDWSKFYPQYYDSESKKMTSEVEIADIGCGYGGLLINLAPEFPDKLLLGMEIRVQVTQYVEDRIIALRNQYRNELQNNYQNISVLRGNAMKFLPNFFHKAQLSKMFFCFPDPHFKQRKHKARIITNTLLAEYAYVLKEGGIIYTITDVEDLHNWMVKHLEEHPMFERLSKEWEKQDKCVSIMWNSTEEGKKVTRNKGSKWVACFKRLPTPDDCE.

Residues 1–52 (MGKIEATSKEEKLRVQKEAEARRRAYRDLKKEARQMQKEVKFDTDDNSELPK) are disordered. S-adenosyl-L-methionine-binding positions include Gly106, 129–130 (EI), 166–167 (NA), and Cys186. Residue Asp189 is part of the active site. 264–266 (TEE) is an S-adenosyl-L-methionine binding site.

The protein belongs to the class I-like SAM-binding methyltransferase superfamily. TrmB family. In terms of assembly, forms a complex with TRM82.

The protein localises to the nucleus. The enzyme catalyses guanosine(46) in tRNA + S-adenosyl-L-methionine = N(7)-methylguanosine(46) in tRNA + S-adenosyl-L-homocysteine. The protein operates within tRNA modification; N(7)-methylguanine-tRNA biosynthesis. Functionally, catalyzes the formation of N(7)-methylguanine at position 46 (m7G46) in tRNA. This Debaryomyces hansenii (strain ATCC 36239 / CBS 767 / BCRC 21394 / JCM 1990 / NBRC 0083 / IGC 2968) (Yeast) protein is tRNA (guanine-N(7)-)-methyltransferase.